Consider the following 799-residue polypeptide: Mitochondrial intermediate peptidase (799 aa).

Residue H562 participates in Zn(2+) binding. E563 is an active-site residue. 2 residues coordinate Zn(2+): H566 and H569.

This sequence belongs to the peptidase M3 family. It depends on Zn(2+) as a cofactor.

It localises to the mitochondrion matrix. It carries out the reaction Release of an N-terminal octapeptide as second stage of processing of some proteins imported into the mitochondrion.. Its function is as follows. Cleaves proteins, imported into the mitochondrion, to their mature size. While most mitochondrial precursor proteins are processed to the mature form in one step by mitochondrial processing peptidase (MPP), the sequential cleavage by MIP of an octapeptide after initial processing by MPP is a required step for a subgroup of nuclear-encoded precursor proteins destined for the matrix or the inner membrane. This Aspergillus niger (strain ATCC MYA-4892 / CBS 513.88 / FGSC A1513) protein is Mitochondrial intermediate peptidase (oct1).